Consider the following 385-residue polypeptide: Elsinochromes biosynthesis cluster protein HP2 (385 aa).

An N-terminal signal peptide occupies residues 1-22 (MVLLYILIMVALIPMYMTVVQD). Transmembrane regions (helical) follow at residues 94 to 114 (TVLS…SMFD) and 148 to 168 (FYGQ…IVLW). N-linked (GlcNAc...) asparagine glycosylation occurs at Asn187. Residues 209-229 (SWTFGQIVPIVLLVSPLVAAF) traverse the membrane as a helical segment. N-linked (GlcNAc...) asparagine glycosylation is present at Asn248. 2 helical membrane passes run 309–329 (AILF…LPLA) and 344–364 (YYAF…AVPF).

The protein resides in the membrane. Part of the gene cluster that mediates the biosynthesis of elsinochromes, pigments consisting of at least four interconvertible tautomers (A, B, C and D) that have a core phenolic quinone to which various side chains are attached and which play an important role in fungal pathogenesis. The non-reducing polyketide synthase PKS1 was proposed to iteratively catalyze decarboxylation between acetyl-CoA and malonyl-CoA subunits for polyketide chain elongation. The released polyketide undergoes cyclization to form an aromatic ring, and proceeds via serial modification steps to produce the heptaketide back- bone of elsinochrome. As elsinochrome has a symmetrical structure, two identical heptaketides are fused to form a core 1,2-dihydrobenzo-perylene ring structure, which can then be successively modified to produce the various derivatives of elsinochrome. Some of these reactions may be cooperatively carried out, at least in part, by the products of RDT1, OXR1 and PKS1. PRF1, embedded within the elsinochrome cluster possibly functions to stabilize some of the biosynthetic enzymes required for elsinochrome production. As prefoldin is a hexamer containing 2 a and 4 b subunits, additional prefoldin subunits, whose coding genes may not immediately link to the elsinochrome biosynthetic gene cluster, are required to fulfill the chaperone function. In addition, no methyltransferase-coding gene exists within the biosynthetic gene cluster, even though elsinochrome has four methyl groups at positions C3, C7, C8 and C12. Apparently, the identified gene cluster does not contain the entire entourage of genes responsible for elsinochrome biosynthesis. Once elsinochrome is synthesized, it must be exported outside the fungal cells, which is probably accomplished by the ECT1 transporter, to avoid toxicity. This chain is Elsinochromes biosynthesis cluster protein HP2, found in Elsinoe fawcettii (Citrus scab fungus).